We begin with the raw amino-acid sequence, 452 residues long: 1,3-beta-glucanosyltransferase gel1 (452 aa).

The signal sequence occupies residues 1-19 (MKASAVTAALAVGASTVLA). An intrachain disulfide couples Cys-71 to Cys-100. (1,3-beta-D-glucosyl)n-binding residues include Tyr-89, Asn-159, Glu-160, Asp-201, and Arg-206. Glu-160 functions as the Proton donor in the catalytic mechanism. 2 disulfide bridges follow: Cys-215/Cys-345 and Cys-233/Cys-264. A glycan (N-linked (GlcNAc...) asparagine) is linked at Asn-249. Residue Glu-261 is the Nucleophile of the active site. Tyr-292 contributes to the (1,3-beta-D-glucosyl)n binding site. Residues 325 to 340 (EKTSNPSGDGNYNKTG) show a composition bias toward polar residues. The tract at residues 325-419 (EKTSNPSGDG…SGTSTSSKGA (95 aa)) is disordered. Asn-337 carries N-linked (GlcNAc...) asparagine glycosylation. Positions 393–419 (STATAEPGSGSATGSSSSGTSTSSKGA) are enriched in low complexity. A lipid anchor (GPI-like-anchor amidated alanine) is attached at Ala-419. Residues 420-452 (AAGLTVPSLTMAPVVVGAVTLLSTVFGAGLVLL) constitute a propeptide, removed in mature form.

It belongs to the glycosyl hydrolase 72 family. Post-translationally, the GPI-like anchor contains a phosphoceramide lipid group.

It is found in the cell membrane. Its function is as follows. Splits internally a 1,3-beta-glucan molecule and transfers the newly generated reducing end (the donor) to the non-reducing end of another 1,3-beta-glucan molecule (the acceptor) forming a 1,3-beta linkage, resulting in the elongation of 1,3-beta-glucan chains in the cell wall. Involved in cell wall morphogenesis. The protein is 1,3-beta-glucanosyltransferase gel1 (gel1) of Aspergillus fumigatus (strain ATCC MYA-4609 / CBS 101355 / FGSC A1100 / Af293) (Neosartorya fumigata).